We begin with the raw amino-acid sequence, 389 residues long: Formate-dependent phosphoribosylglycinamide formyltransferase (389 aa).

Residues 21 to 22 (EL) and Glu-81 contribute to the N(1)-(5-phospho-beta-D-ribosyl)glycinamide site. ATP contacts are provided by residues Arg-113, Lys-154, 159–164 (SSGKGQ), 194–197 (EEFI), and Glu-202. Positions 118–307 (RLAAEKLGLK…EFEIHVRAIL (190 aa)) constitute an ATP-grasp domain. 2 residues coordinate Mg(2+): Glu-266 and Glu-278. Residues Asp-285, Lys-353, and 360 to 361 (RR) contribute to the N(1)-(5-phospho-beta-D-ribosyl)glycinamide site.

It belongs to the PurK/PurT family. Homodimer.

The enzyme catalyses N(1)-(5-phospho-beta-D-ribosyl)glycinamide + formate + ATP = N(2)-formyl-N(1)-(5-phospho-beta-D-ribosyl)glycinamide + ADP + phosphate + H(+). It participates in purine metabolism; IMP biosynthesis via de novo pathway; N(2)-formyl-N(1)-(5-phospho-D-ribosyl)glycinamide from N(1)-(5-phospho-D-ribosyl)glycinamide (formate route): step 1/1. Functionally, involved in the de novo purine biosynthesis. Catalyzes the transfer of formate to 5-phospho-ribosyl-glycinamide (GAR), producing 5-phospho-ribosyl-N-formylglycinamide (FGAR). Formate is provided by PurU via hydrolysis of 10-formyl-tetrahydrofolate. The protein is Formate-dependent phosphoribosylglycinamide formyltransferase of Methanocaldococcus jannaschii (strain ATCC 43067 / DSM 2661 / JAL-1 / JCM 10045 / NBRC 100440) (Methanococcus jannaschii).